The chain runs to 275 residues: Subtilisin (275 aa).

Q2 contacts Ca(2+). One can recognise a Peptidase S8 domain in the interval 5–274; sequence PYGISQIKAP…KGLINVQAAA (270 aa). Residue D32 is the Charge relay system of the active site. D41 is a binding site for Ca(2+). H64 (charge relay system) is an active-site residue. Ca(2+)-binding residues include L75, N77, I79, V81, A169, Y171, and T174. S221 (charge relay system) is an active-site residue.

The protein belongs to the peptidase S8 family. It depends on Ca(2+) as a cofactor.

Its subcellular location is the secreted. It carries out the reaction Hydrolysis of proteins with broad specificity for peptide bonds, and a preference for a large uncharged residue in P1. Hydrolyzes peptide amides.. In terms of biological role, subtilisin is an extracellular alkaline serine protease, it catalyzes the hydrolysis of proteins and peptide amides. The sequence is that of Subtilisin (apr) from Bacillus pumilus (Bacillus mesentericus).